The sequence spans 428 residues: Enolase (428 aa).

Residue Gln-163 coordinates (2R)-2-phosphoglycerate. The active-site Proton donor is Glu-205. Residues Asp-242, Glu-285, and Asp-312 each coordinate Mg(2+). Lys-337, Arg-366, Ser-367, and Lys-388 together coordinate (2R)-2-phosphoglycerate. Lys-337 (proton acceptor) is an active-site residue.

The protein belongs to the enolase family. The cofactor is Mg(2+).

Its subcellular location is the cytoplasm. It is found in the secreted. The protein resides in the cell surface. The enzyme catalyses (2R)-2-phosphoglycerate = phosphoenolpyruvate + H2O. It participates in carbohydrate degradation; glycolysis; pyruvate from D-glyceraldehyde 3-phosphate: step 4/5. Its function is as follows. Catalyzes the reversible conversion of 2-phosphoglycerate (2-PG) into phosphoenolpyruvate (PEP). It is essential for the degradation of carbohydrates via glycolysis. The polypeptide is Enolase (Persephonella marina (strain DSM 14350 / EX-H1)).